Consider the following 123-residue polypeptide: UPF0102 protein Mflv_4140 (123 aa).

This sequence belongs to the UPF0102 family.

In Mycolicibacterium gilvum (strain PYR-GCK) (Mycobacterium gilvum (strain PYR-GCK)), this protein is UPF0102 protein Mflv_4140.